Here is a 243-residue protein sequence, read N- to C-terminus: NAD-dependent protein deacylase (243 aa).

The Deacetylase sirtuin-type domain maps to 1–234; the sequence is MYQHIVVLTG…PKLVDTILAG (234 aa). Residue 10–29 coordinates NAD(+); that stretch reads GAGISAESGLRTFRDQDGLW. Positions 54 and 57 each coordinate substrate. 91 to 94 provides a ligand contact to NAD(+); sequence QNID. The active-site Proton acceptor is the H109. Zn(2+) contacts are provided by C117 and C136. NAD(+)-binding positions include 176-178, 202-204, and A220; these read GTS and NLQ.

This sequence belongs to the sirtuin family. Class III subfamily. Requires Zn(2+) as cofactor.

The protein localises to the cytoplasm. The enzyme catalyses N(6)-acetyl-L-lysyl-[protein] + NAD(+) + H2O = 2''-O-acetyl-ADP-D-ribose + nicotinamide + L-lysyl-[protein]. It carries out the reaction N(6)-succinyl-L-lysyl-[protein] + NAD(+) + H2O = 2''-O-succinyl-ADP-D-ribose + nicotinamide + L-lysyl-[protein]. Functionally, NAD-dependent lysine deacetylase and desuccinylase that specifically removes acetyl and succinyl groups on target proteins. Modulates the activities of several proteins which are inactive in their acylated form. The chain is NAD-dependent protein deacylase from Shewanella oneidensis (strain ATCC 700550 / JCM 31522 / CIP 106686 / LMG 19005 / NCIMB 14063 / MR-1).